The primary structure comprises 359 residues: sn-1 linoleoyl-lipid 6-desaturase (359 aa).

2 consecutive transmembrane segments (helical) span residues 45–65 (LIIVLWLFSAWAFVLFAPVIF) and 69–89 (LLGCMVLAIALAAFSFNVGHD). The Histidine box-1 signature appears at 88–92 (HDANH). The Histidine box-2 motif lies at 123 to 128 (HNYLHH). The next 3 membrane-spanning stretches (helical) occupy residues 165–185 (IWGLYLFIPFYWFLYDVYLVL), 206–226 (LLGIKLLWLGYVFGLPLALGF), and 231–251 (VLIGASVTYMTYGIVVCTIFM). The short motif at 306 to 310 (HHLFP) is the Histidine box-3 element.

It belongs to the fatty acid desaturase type 2 family. Fe(2+) serves as cofactor.

The protein localises to the membrane. The catalysed reaction is a 1-[(9Z,12Z)-octadecdienoyl]-2-acyl-glycerolipid + 2 reduced [2Fe-2S]-[ferredoxin] + O2 + 2 H(+) = a 1-[(6Z,9Z,12Z)-octadectrienoyl]-2-acyl-glycerolipid + 2 oxidized [2Fe-2S]-[ferredoxin] + 2 H2O. It participates in lipid metabolism; polyunsaturated fatty acid biosynthesis. In terms of biological role, desaturase involved in fatty acid biosynthesis. Introduces a double bond at carbon 6 of linoleoyl group (18:2) attached to the sn-1 position of the glycerol moiety of membrane glycerolipids, leading to the formation of gamma-linolenic acid (GLA). In Synechocystis sp. (strain ATCC 27184 / PCC 6803 / Kazusa), this protein is sn-1 linoleoyl-lipid 6-desaturase.